We begin with the raw amino-acid sequence, 89 residues long: Small ribosomal subunit protein uS15 (89 aa).

This sequence belongs to the universal ribosomal protein uS15 family. As to quaternary structure, part of the 30S ribosomal subunit. Forms a bridge to the 50S subunit in the 70S ribosome, contacting the 23S rRNA.

One of the primary rRNA binding proteins, it binds directly to 16S rRNA where it helps nucleate assembly of the platform of the 30S subunit by binding and bridging several RNA helices of the 16S rRNA. Functionally, forms an intersubunit bridge (bridge B4) with the 23S rRNA of the 50S subunit in the ribosome. In Mycobacterium avium (strain 104), this protein is Small ribosomal subunit protein uS15.